Reading from the N-terminus, the 330-residue chain is D-lactate dehydrogenase (330 aa).

Residues 156 to 157, D176, 206 to 207, 233 to 235, and D259 each bind NAD(+); these read RI, VP, and AAR. The active site involves R235. E264 is an active-site residue. H296 (proton donor) is an active-site residue.

It belongs to the D-isomer specific 2-hydroxyacid dehydrogenase family.

The catalysed reaction is (R)-lactate + NAD(+) = pyruvate + NADH + H(+). This chain is D-lactate dehydrogenase (ldhD), found in Staphylococcus aureus (strain MRSA252).